Reading from the N-terminus, the 44-residue chain is Photosystem I reaction center subunit IX (44 aa).

A helical transmembrane segment spans residues 7 to 27; that stretch reads YLSTAPVLAILCVSFLAALLI.

It belongs to the PsaJ family.

It localises to the plastid. The protein resides in the chloroplast thylakoid membrane. Functionally, may help in the organization of the PsaE and PsaF subunits. The polypeptide is Photosystem I reaction center subunit IX (Pinus thunbergii (Japanese black pine)).